Here is a 476-residue protein sequence, read N- to C-terminus: Deoxyguanosinetriphosphate triphosphohydrolase-like protein 2 (476 aa).

A disordered region spans residues 1 to 20 (MYTDADRSREVVPEKDGHDK). The 174-residue stretch at 60–233 (RLTHSLEVAQ…MDLADDIAYS (174 aa)) folds into the HD domain.

It belongs to the dGTPase family. Type 2 subfamily.

This chain is Deoxyguanosinetriphosphate triphosphohydrolase-like protein 2, found in Mesorhizobium japonicum (strain LMG 29417 / CECT 9101 / MAFF 303099) (Mesorhizobium loti (strain MAFF 303099)).